We begin with the raw amino-acid sequence, 309 residues long: 2-phospho-L-lactate transferase (309 aa).

7,8-didemethyl-8-hydroxy-5-deazariboflavin contacts are provided by Asp-50 and Arg-89.

Belongs to the CofD family. Homodimer. Mg(2+) is required as a cofactor.

The catalysed reaction is (2S)-lactyl-2-diphospho-5'-guanosine + 7,8-didemethyl-8-hydroxy-5-deazariboflavin = oxidized coenzyme F420-0 + GMP + H(+). It functions in the pathway cofactor biosynthesis; coenzyme F420 biosynthesis. Functionally, catalyzes the transfer of the 2-phospholactate moiety from (2S)-lactyl-2-diphospho-5'-guanosine to 7,8-didemethyl-8-hydroxy-5-deazariboflavin (FO) with the formation of oxidized coenzyme F420-0 and GMP. This chain is 2-phospho-L-lactate transferase, found in Methanococcus maripaludis (strain DSM 14266 / JCM 13030 / NBRC 101832 / S2 / LL).